Consider the following 239-residue polypeptide: 7-cyano-7-deazaguanine synthase (239 aa).

7 to 17 (LSGGIDSSTLL) contacts ATP. The Zn(2+) site is built by Cys-184, Cys-192, Cys-195, and Cys-198.

It belongs to the QueC family. Zn(2+) serves as cofactor.

The enzyme catalyses 7-carboxy-7-deazaguanine + NH4(+) + ATP = 7-cyano-7-deazaguanine + ADP + phosphate + H2O + H(+). It functions in the pathway purine metabolism; 7-cyano-7-deazaguanine biosynthesis. Catalyzes the ATP-dependent conversion of 7-carboxy-7-deazaguanine (CDG) to 7-cyano-7-deazaguanine (preQ(0)). In Archaeoglobus fulgidus (strain ATCC 49558 / DSM 4304 / JCM 9628 / NBRC 100126 / VC-16), this protein is 7-cyano-7-deazaguanine synthase.